The sequence spans 75 residues: MRLVVCLVFLASFALVCQGQGYKGPYTRPILRPYVRPVVSYNACTLSCRGITTTQARSCSTRLGRCCHVAKGYSG.

The N-terminal stretch at 1–19 (MRLVVCLVFLASFALVCQG) is a signal peptide. Gln20 is modified (pyrrolidone carboxylic acid). Cystine bridges form between Cys44-Cys59 and Cys48-Cys66. At Ser74 the chain carries Serine amide.

It belongs to the penaeidin family.

Its subcellular location is the cytoplasmic granule. Functionally, antibacterial and antifungal activity. Presents chitin-binding activity. This Penaeus setiferus (Atlantic white shrimp) protein is Penaeidin-3n.